The chain runs to 366 residues: ATPase ASNA1 homolog (366 aa).

Residue 33–40 participates in ATP binding; that stretch reads KGGVGKTT. The active site involves D62. E234 and N261 together coordinate ATP.

It belongs to the arsA ATPase family. As to quaternary structure, homodimer.

It localises to the cytoplasm. The protein resides in the endoplasmic reticulum. ATPase required for the post-translational delivery of tail-anchored (TA) proteins to the endoplasmic reticulum. Recognizes and selectively binds the transmembrane domain of TA proteins in the cytosol. This complex then targets to the endoplasmic reticulum by membrane-bound receptors, where the tail-anchored protein is released for insertion. This process is regulated by ATP binding and hydrolysis. ATP binding drives the homodimer towards the closed dimer state, facilitating recognition of newly synthesized TA membrane proteins. ATP hydrolysis is required for insertion. Subsequently, the homodimer reverts towards the open dimer state, lowering its affinity for the membrane-bound receptor, and returning it to the cytosol to initiate a new round of targeting. This Cryptosporidium parvum (strain Iowa II) protein is ATPase ASNA1 homolog.